The chain runs to 853 residues: DNA mismatch repair protein MutS (853 aa).

Glycine 614 to serine 621 is an ATP binding site.

This sequence belongs to the DNA mismatch repair MutS family.

In terms of biological role, this protein is involved in the repair of mismatches in DNA. It is possible that it carries out the mismatch recognition step. This protein has a weak ATPase activity. This chain is DNA mismatch repair protein MutS, found in Escherichia coli O157:H7 (strain EC4115 / EHEC).